The chain runs to 146 residues: Large ribosomal subunit protein uL16 (146 aa).

This sequence belongs to the universal ribosomal protein uL16 family. As to quaternary structure, part of the 50S ribosomal subunit.

In terms of biological role, binds 23S rRNA and is also seen to make contacts with the A and possibly P site tRNAs. The chain is Large ribosomal subunit protein uL16 from Thermomicrobium roseum (strain ATCC 27502 / DSM 5159 / P-2).